Reading from the N-terminus, the 134-residue chain is ATP synthase epsilon chain, chloroplastic (134 aa).

This sequence belongs to the ATPase epsilon chain family. F-type ATPases have 2 components, CF(1) - the catalytic core - and CF(0) - the membrane proton channel. CF(1) has five subunits: alpha(3), beta(3), gamma(1), delta(1), epsilon(1). CF(0) has three main subunits: a, b and c.

The protein localises to the plastid. The protein resides in the chloroplast thylakoid membrane. Functionally, produces ATP from ADP in the presence of a proton gradient across the membrane. This Amborella trichopoda protein is ATP synthase epsilon chain, chloroplastic.